We begin with the raw amino-acid sequence, 153 residues long: ATP synthase subunit b' (153 aa).

A helical membrane pass occupies residues 23–40 (LMAIQVVALTYILNSLFF).

The protein belongs to the ATPase B chain family. In terms of assembly, F-type ATPases have 2 components, F(1) - the catalytic core - and F(0) - the membrane proton channel. F(1) has five subunits: alpha(3), beta(3), gamma(1), delta(1), epsilon(1). F(0) has four main subunits: a(1), b(1), b'(1) and c(10-14). The alpha and beta chains form an alternating ring which encloses part of the gamma chain. F(1) is attached to F(0) by a central stalk formed by the gamma and epsilon chains, while a peripheral stalk is formed by the delta, b and b' chains.

The protein resides in the cellular thylakoid membrane. Functionally, f(1)F(0) ATP synthase produces ATP from ADP in the presence of a proton or sodium gradient. F-type ATPases consist of two structural domains, F(1) containing the extramembraneous catalytic core and F(0) containing the membrane proton channel, linked together by a central stalk and a peripheral stalk. During catalysis, ATP synthesis in the catalytic domain of F(1) is coupled via a rotary mechanism of the central stalk subunits to proton translocation. Its function is as follows. Component of the F(0) channel, it forms part of the peripheral stalk, linking F(1) to F(0). The b'-subunit is a diverged and duplicated form of b found in plants and photosynthetic bacteria. This is ATP synthase subunit b' from Prochlorococcus marinus (strain MIT 9215).